The sequence spans 276 residues: Elongation factor Ts (276 aa).

The interval 80 to 83 is involved in Mg(2+) ion dislocation from EF-Tu; sequence TDFV.

This sequence belongs to the EF-Ts family.

The protein resides in the cytoplasm. In terms of biological role, associates with the EF-Tu.GDP complex and induces the exchange of GDP to GTP. It remains bound to the aminoacyl-tRNA.EF-Tu.GTP complex up to the GTP hydrolysis stage on the ribosome. In Kocuria rhizophila (strain ATCC 9341 / DSM 348 / NBRC 103217 / DC2201), this protein is Elongation factor Ts.